The chain runs to 322 residues: Transaldolase (322 aa).

Lysine 136 functions as the Schiff-base intermediate with substrate in the catalytic mechanism.

Belongs to the transaldolase family. Type 1 subfamily. Homodimer.

The protein localises to the cytoplasm. The enzyme catalyses D-sedoheptulose 7-phosphate + D-glyceraldehyde 3-phosphate = D-erythrose 4-phosphate + beta-D-fructose 6-phosphate. The protein operates within carbohydrate degradation; pentose phosphate pathway; D-glyceraldehyde 3-phosphate and beta-D-fructose 6-phosphate from D-ribose 5-phosphate and D-xylulose 5-phosphate (non-oxidative stage): step 2/3. Transaldolase is important for the balance of metabolites in the pentose-phosphate pathway. This Xanthomonas campestris pv. campestris (strain B100) protein is Transaldolase.